The sequence spans 238 residues: Small heat shock protein, chloroplastic (238 aa).

The segment at 31-87 is disordered; the sequence is APLSTGGRTRPLSVASAAQENRDNSVDVQVSQAQNAGNQQGNAVQRRPRRAGFDISP. The span at 58 to 75 shows a compositional bias: low complexity; it reads VQVSQAQNAGNQQGNAVQ. Residues 124-238 form the sHSP domain; sequence AARARRRMPW…ERKVIDVQVQ (115 aa).

Belongs to the small heat shock protein (HSP20) family.

It localises to the plastid. The protein resides in the chloroplast. This Triticum aestivum (Wheat) protein is Small heat shock protein, chloroplastic (HSP21).